A 210-amino-acid chain; its full sequence is ATP-dependent dethiobiotin synthetase BioD (210 aa).

An ATP-binding site is contributed by 13-18 (GIGKTV). Threonine 17 serves as a coordination point for Mg(2+). Lysine 33 is an active-site residue. Glutamate 101 contacts Mg(2+). Residues 101 to 104 (EGAG) and 185 to 187 (PWL) contribute to the ATP site.

It belongs to the dethiobiotin synthetase family. Homodimer. Mg(2+) serves as cofactor.

The protein resides in the cytoplasm. The catalysed reaction is (7R,8S)-7,8-diammoniononanoate + CO2 + ATP = (4R,5S)-dethiobiotin + ADP + phosphate + 3 H(+). It participates in cofactor biosynthesis; biotin biosynthesis; biotin from 7,8-diaminononanoate: step 1/2. Functionally, catalyzes a mechanistically unusual reaction, the ATP-dependent insertion of CO2 between the N7 and N8 nitrogen atoms of 7,8-diaminopelargonic acid (DAPA, also called 7,8-diammoniononanoate) to form a ureido ring. The polypeptide is ATP-dependent dethiobiotin synthetase BioD (Bradyrhizobium sp. (strain BTAi1 / ATCC BAA-1182)).